Reading from the N-terminus, the 109-residue chain is Flagellar hook-basal body complex protein FliE (109 aa).

The interval 1 to 38 is disordered; it reads MQAIHNDKSLLSPFSELNTDNRTKREESGSTFKEQKGG. The segment covering 19-38 has biased composition (basic and acidic residues); it reads TDNRTKREESGSTFKEQKGG.

The protein belongs to the FliE family.

The protein localises to the bacterial flagellum basal body. The protein is Flagellar hook-basal body complex protein FliE of Helicobacter pylori (strain P12).